Reading from the N-terminus, the 130-residue chain is Small ribosomal subunit protein uS8 (130 aa).

The protein belongs to the universal ribosomal protein uS8 family.

The sequence is that of Small ribosomal subunit protein uS8 (RPS15A) from Strongylocentrotus purpuratus (Purple sea urchin).